Reading from the N-terminus, the 117-residue chain is LIM and senescent cell antigen-like-containing domain protein 3 (117 aa).

The 48-residue stretch at 70–117 (ATCERCKGGFAPAETIVNSNGELYHEQCFVCAQCFQQFPEGLFYEERT) folds into the LIM zinc-binding domain.

As to expression, detected in testis.

The protein localises to the cytoplasm. The sequence is that of LIM and senescent cell antigen-like-containing domain protein 3 (LIMS3) from Homo sapiens (Human).